The primary structure comprises 168 residues: DAZ-associated protein 2 (168 aa).

Positions 1-13 are enriched in low complexity; the sequence is MNSKGQYPTQPTY. A disordered region spans residues 1–25; the sequence is MNSKGQYPTQPTYPVQPPGNPVYPQ. Residues 39–42 carry the PPAY motif; the sequence is PPAY. The residue at position 77 (serine 77) is a Phosphoserine.

Interacts with SOX6. Interacts with DAZ1 and DAZL. Interacts with IL17RB. May interact with FAM168B. Interacts with INCA1. Interacts with EIF4G1 and EIF4G2. Interacts (via PPAY motif) with NEDD4 (via WW domains). Interacts with transcription factor TCF4; the interaction results in localization of DAZAP2 to the nucleus. Interacts with transcription factors TCF7 and TCF7L1. Interacts with transcription factor LEF1. Interacts with serine/threonine-protein kinase HIPK2; the interaction results in phosphorylation of DAZAP2 which causes localization of DAZAP2 to the nucleus, reduces interaction of DAZAP2 with HIPK2 and prevents DAZAP2-dependent degradation of HIPK2. Interacts with ubiquitin ligase SIAH1; the interaction is decreased following phosphorylation of DAZAP2 by HIPK2. Interacts with TP53; the interaction is triggered by DNA damage. Ubiquitinated by SMURF2, leading to proteasomal degradation. Ubiquitinated by NEDD4, leading to proteasomal degradation. In terms of processing, following DNA damage, phosphorylated by HIPK2 which promotes DAZAP2 localization to the nucleus, reduces interaction of DAZAP2 with HIPK2 and SIAH1, and prevents DAZAP2-dependent ubiquitination of HIPK2 by E3 ubiquitin-protein ligase SIAH1 and subsequent HIPK2 proteasomal degradation. As to expression, widely expressed. Highly expressed in brain.

Its subcellular location is the cytoplasm. It is found in the nucleus. The protein resides in the nucleus speckle. It localises to the nuclear body. The protein localises to the stress granule. In unstressed cells, promotes SIAH1-mediated polyubiquitination and degradation of the serine/threonine-protein kinase HIPK2, probably by acting as a loading factor that potentiates complex formation between HIPK2 and ubiquitin ligase SIAH1. In response to DNA damage, localizes to the nucleus following phosphorylation by HIPK2 and modulates the expression of a subset of TP53/p53 target genes by binding to TP53 at target gene promoters. This limits the expression of a number of cell death-mediating TP53 target genes, reducing DNA damage-induced cell death. Enhances the binding of transcription factor TCF7L2/TCF4, a Wnt signaling pathway effector, to the promoters of target genes. Plays a role in stress granule formation. This Mus musculus (Mouse) protein is DAZ-associated protein 2 (Dazap2).